The sequence spans 576 residues: Sulfite reductase [NADPH] hemoprotein beta-component (576 aa).

Over residues 1–12 (MNVKTEPDRSRD) the composition is skewed to basic and acidic residues. Residues 1–25 (MNVKTEPDRSRDVSQPLDKLGPDET) are disordered. [4Fe-4S] cluster contacts are provided by Cys441, Cys447, Cys486, and Cys490. Cys490 provides a ligand contact to siroheme.

Belongs to the nitrite and sulfite reductase 4Fe-4S domain family. Alpha(8)-beta(8). The alpha component is a flavoprotein, the beta component is a hemoprotein. Siroheme is required as a cofactor. It depends on [4Fe-4S] cluster as a cofactor.

The enzyme catalyses hydrogen sulfide + 3 NADP(+) + 3 H2O = sulfite + 3 NADPH + 4 H(+). Its pathway is sulfur metabolism; hydrogen sulfide biosynthesis; hydrogen sulfide from sulfite (NADPH route): step 1/1. In terms of biological role, component of the sulfite reductase complex that catalyzes the 6-electron reduction of sulfite to sulfide. This is one of several activities required for the biosynthesis of L-cysteine from sulfate. This Nitrobacter hamburgensis (strain DSM 10229 / NCIMB 13809 / X14) protein is Sulfite reductase [NADPH] hemoprotein beta-component.